The sequence spans 1401 residues: Bifunctional 3'-5' exonuclease/ATP-dependent helicase WRN (1401 aa).

Positions 1 to 271 (METTSLQRKF…FPVTCRNLET (271 aa)) are interaction with WRNIP1. A KBM 1 motif is present at residues 6 to 18 (LQRKFPEWMSMQS). A 3'-5' exonuclease domain is found at 51–223 (YEASDCSFLS…GLIIYQKLGN (173 aa)). Zn(2+)-binding residues include Asp-76 and Glu-78. Residue Lys-148 forms a Glycyl lysine isopeptide (Lys-Gly) (interchain with G-Cter in SUMO2) linkage. Residue Asp-210 participates in Zn(2+) binding. Residues Lys-235 and Lys-246 each participate in a glycyl lysine isopeptide (Lys-Gly) (interchain with G-Cter in SUMO2) cross-link. Positions 401-427 (QAKEEKYNDVSHQLSEHLSPNDDENDS) are disordered. Ser-419, Ser-433, and Ser-444 each carry phosphoserine. The tract at residues 464–492 (GTNGRLPPEEEDGHGNEAIKEEQEEEDHL) is disordered. One can recognise a Helicase ATP-binding domain in the interval 522–688 (HSVLEERRDN…ISCLNLKDPQ (167 aa)). Position 535 to 542 (535 to 542 (MATGYGKS)) interacts with ATP. Residues 632-635 (DEAH) carry the DEAH box motif. Positions 713–866 (DLKPFLVRKA…KLKMMVKMEK (154 aa)) constitute a Helicase C-terminal domain. Zn(2+) contacts are provided by Cys-873, Cys-900, Cys-901, and Cys-904. The segment at 952-958 (RGSNSQR) is interaction with DNA. The segment at 1041 to 1106 (LLPSSNPVSP…PSPGTSSSPL (66 aa)) is disordered. Residues 1043–1069 (PSSNPVSPETTQHSSNQNPAGLTTKQS) show a composition bias toward polar residues. Basic and acidic residues predominate over residues 1070–1081 (NLERTHSYKVPE). At Ser-1098 the chain carries Phosphoserine. Positions 1115 to 1194 (LDARTGLYAR…KHFCQVTSVQ (80 aa)) constitute an HRDC domain. A compositionally biased stretch (polar residues) spans 1323–1332 (GSDSRTQPPC). The disordered stretch occupies residues 1323-1401 (GSDSRTQPPC…AKTKKKGLFS (79 aa)). The segment covering 1348–1358 (ESCKESKEAVT) has biased composition (basic and acidic residues). The residue at position 1364 (Ser-1364) is a Phosphoserine. Residues 1367 to 1376 (SKRKLPEWFA) carry the KBM 2 motif. Over residues 1382-1392 (SADTGSSSSMA) the composition is skewed to polar residues. An XLM motif is present at residues 1388–1401 (SSSMAKTKKKGLFS).

Belongs to the helicase family. RecQ subfamily. In terms of assembly, monomer, and homooligomer. May exist as homodimer, homotrimer, homotetramer and/or homohexamer. Homotetramer, or homohexamer, when bound to DNA. Interacts via its N-terminal domain with WRNIP1. Interacts with EXO1, PCNA and SUPV3L1. Interacts with PML (isoform PML-4). Interacts (via KBM motif) with XRCC5 and XRCC6; promoting recruitment to DNA damage sites. Interacts with RECQL5; this interaction stimulates WRN helicase activity on DNA fork duplexes. Requires Zn(2+) as cofactor. Mn(2+) serves as cofactor. In terms of processing, phosphorylated by PRKDC. As to expression, expressed ubiquitously in most organs at a low level, highly expressed in testis, ovary and spleen.

The protein localises to the nucleus. It is found in the nucleolus. Its subcellular location is the nucleoplasm. It localises to the chromosome. It catalyses the reaction Couples ATP hydrolysis with the unwinding of duplex DNA by translocating in the 3'-5' direction.. The catalysed reaction is ATP + H2O = ADP + phosphate + H(+). Zinc ions stimulate the exonuclease activity. Functionally, multifunctional enzyme that has magnesium and ATP-dependent 3'-5' DNA-helicase activity. Has 3'-&gt;5' exonuclease activity on forked dsDNA. Has no nuclease activity towards single-stranded DNA or blunt-ended double-stranded DNA. Binds preferentially to DNA substrates containing alternate secondary structures, such as replication forks and Holliday junctions. May play an important role in the dissociation of joint DNA molecules that can arise as products of homologous recombination, at stalled replication forks or during DNA repair. Alleviates stalling of DNA polymerases at the site of DNA lesions. Unwinds some G-quadruplex DNA. Plays a role in the formation of DNA replication focal centers; stably associates with foci elements generating binding sites for RP-A. Plays a role in double-strand break repair after gamma-irradiation. The protein is Bifunctional 3'-5' exonuclease/ATP-dependent helicase WRN (Wrn) of Mus musculus (Mouse).